The sequence spans 460 residues: ATP synthase subunit beta (460 aa).

Residue 148–155 (GGAGVGKT) coordinates ATP.

The protein belongs to the ATPase alpha/beta chains family. In terms of assembly, F-type ATPases have 2 components, CF(1) - the catalytic core - and CF(0) - the membrane proton channel. CF(1) has five subunits: alpha(3), beta(3), gamma(1), delta(1), epsilon(1). CF(0) has three main subunits: a(1), b(2) and c(9-12). The alpha and beta chains form an alternating ring which encloses part of the gamma chain. CF(1) is attached to CF(0) by a central stalk formed by the gamma and epsilon chains, while a peripheral stalk is formed by the delta and b chains.

Its subcellular location is the cell inner membrane. It catalyses the reaction ATP + H2O + 4 H(+)(in) = ADP + phosphate + 5 H(+)(out). Its function is as follows. Produces ATP from ADP in the presence of a proton gradient across the membrane. The catalytic sites are hosted primarily by the beta subunits. This chain is ATP synthase subunit beta, found in Alcanivorax borkumensis (strain ATCC 700651 / DSM 11573 / NCIMB 13689 / SK2).